A 128-amino-acid chain; its full sequence is Modulator protein MzrA (128 aa).

At 1–11 (MMVMKRPSLRQ) the chain is on the cytoplasmic side. The chain crosses the membrane as a helical span at residues 12–32 (FSWLLGGSLLLGALFWLWLAV). The Periplasmic segment spans residues 33 to 128 (QQQEATLAIR…RLRDAPHRLG (96 aa)).

This sequence belongs to the MzrA family. In terms of assembly, interacts with EnvZ.

The protein resides in the cell inner membrane. Functionally, modulates the activity of the EnvZ/OmpR two-component regulatory system, probably by directly modulating EnvZ enzymatic activity and increasing stability of phosphorylated OmpR. This chain is Modulator protein MzrA, found in Klebsiella pneumoniae subsp. pneumoniae (strain ATCC 700721 / MGH 78578).